We begin with the raw amino-acid sequence, 346 residues long: UDP-3-O-acylglucosamine N-acyltransferase (346 aa).

Histidine 240 serves as the catalytic Proton acceptor.

It belongs to the transferase hexapeptide repeat family. LpxD subfamily. As to quaternary structure, homotrimer.

It carries out the reaction a UDP-3-O-[(3R)-3-hydroxyacyl]-alpha-D-glucosamine + a (3R)-hydroxyacyl-[ACP] = a UDP-2-N,3-O-bis[(3R)-3-hydroxyacyl]-alpha-D-glucosamine + holo-[ACP] + H(+). It functions in the pathway bacterial outer membrane biogenesis; LPS lipid A biosynthesis. Its function is as follows. Catalyzes the N-acylation of UDP-3-O-acylglucosamine using 3-hydroxyacyl-ACP as the acyl donor. Is involved in the biosynthesis of lipid A, a phosphorylated glycolipid that anchors the lipopolysaccharide to the outer membrane of the cell. In Bacteroides fragilis (strain YCH46), this protein is UDP-3-O-acylglucosamine N-acyltransferase.